The primary structure comprises 182 residues: Inosine/xanthosine triphosphatase (182 aa).

This sequence belongs to the YjjX NTPase family. As to quaternary structure, homodimer. Mg(2+) is required as a cofactor. Requires Mn(2+) as cofactor.

It carries out the reaction XTP + H2O = XDP + phosphate + H(+). The catalysed reaction is ITP + H2O = IDP + phosphate + H(+). In terms of biological role, phosphatase that hydrolyzes non-canonical purine nucleotides such as XTP and ITP to their respective diphosphate derivatives. Probably excludes non-canonical purines from DNA/RNA precursor pool, thus preventing their incorporation into DNA/RNA and avoiding chromosomal lesions. The sequence is that of Inosine/xanthosine triphosphatase from Vibrio parahaemolyticus serotype O3:K6 (strain RIMD 2210633).